Here is a 189-residue protein sequence, read N- to C-terminus: dCTP deaminase (189 aa).

DCTP contacts are provided by residues 112–117 (KSTYAR), 136–138 (TLE), Q157, Y171, and Q181. E138 functions as the Proton donor/acceptor in the catalytic mechanism.

This sequence belongs to the dCTP deaminase family. In terms of assembly, homotrimer.

It catalyses the reaction dCTP + H2O + H(+) = dUTP + NH4(+). The protein operates within pyrimidine metabolism; dUMP biosynthesis; dUMP from dCTP (dUTP route): step 1/2. In terms of biological role, catalyzes the deamination of dCTP to dUTP. This is dCTP deaminase from Burkholderia orbicola (strain MC0-3).